The sequence spans 950 residues: MSLPSPLIPVAELAMQNAQQSGYLEHWPQALITQFQFISGLSKFVVETVQRDAQLAESLPEMLAQESRQEAYRTRLAEQLQACHDEVAGHRVLRQFRNREMVYIAWKDFTQAWSLEESLSHLSELAEAMIFETYQWQYQLCCKEWGTPTNAQGEAQPMLIIGMGKLGGGELNFSSDIDLIFTYPENGETQGARRSIANAQFFTRLGQRLIKALDQQTFDGFCYRVDMRLRPFGESGPLVMSYAALEDYYQEQGRDWERYAMIKARVMGREMYPEYQELRQMLRPFVFRRYIDFSAIQSLRRMKSMISSEVRRRGLSNNIKLGAGGIREIEFIAQVFQLIRGGREPALRQRGLLVTLEAIKQLQLLEEAQVCHLVEAYKYLRRLENLLQAMADKQTQTLPDNELEQLALAVAMGYSQWQALQNDVQQHMAKVHAVFVTLIGDEEDEVSPVERHFNELWDMAHNPEVIEQILQNDLACQNAATMSEQIIQFKADLAKKTLGPRGREVLNRLMPKLFSAIFADADAQFGLPRVLHLLHNIATRTTYLELLDEHPAALTQLVRLCTASPMISEQLARYPILLDELIDPQQLYNPIALDAYRTELRDFLARIPEDDVEQQMDALRQFKQICSLRIAAADIAGVLPVMKVSDHLTYLAEAIVEAVVHQAWQQVAEKYGEPTHLKDREGKGFAVVGYGKVGGWELGYNSDLDVVFLHDCPVNVYTDGKKEIDGRQFYLRLAQRIIHIFSTRTASGILYEVDTRLRPSGASGLLVCPVDAFEEYQHNDAWTWEHQALVRARMIYGDEHLASEFHRVRHQVLAKPREQAKLQKEVADMRAKMRDHLGGKKSDRFMLKQDQGGITDIEFLAQYLVLNYSAEKPKLTRWCDNVRIFETLIAQGVMEEAQAMLLTQAYTTMRDEIHRRNLLNLDADVALDKFVALRQGVSKAWQEWLESSTI.

Residues 1–443 (MSLPSPLIPV…VFVTLIGDEE (443 aa)) are adenylyl removase. The tract at residues 450–950 (ERHFNELWDM…WQEWLESSTI (501 aa)) is adenylyl transferase.

It belongs to the GlnE family. Requires Mg(2+) as cofactor.

It catalyses the reaction [glutamine synthetase]-O(4)-(5'-adenylyl)-L-tyrosine + phosphate = [glutamine synthetase]-L-tyrosine + ADP. It carries out the reaction [glutamine synthetase]-L-tyrosine + ATP = [glutamine synthetase]-O(4)-(5'-adenylyl)-L-tyrosine + diphosphate. Involved in the regulation of glutamine synthetase GlnA, a key enzyme in the process to assimilate ammonia. When cellular nitrogen levels are high, the C-terminal adenylyl transferase (AT) inactivates GlnA by covalent transfer of an adenylyl group from ATP to specific tyrosine residue of GlnA, thus reducing its activity. Conversely, when nitrogen levels are low, the N-terminal adenylyl removase (AR) activates GlnA by removing the adenylyl group by phosphorolysis, increasing its activity. The regulatory region of GlnE binds the signal transduction protein PII (GlnB) which indicates the nitrogen status of the cell. This Vibrio vulnificus (strain CMCP6) protein is Bifunctional glutamine synthetase adenylyltransferase/adenylyl-removing enzyme.